A 423-amino-acid chain; its full sequence is AP-1 complex subunit mu-1 (423 aa).

An N-acetylserine modification is found at serine 2. 3 positions are modified to phosphothreonine: threonine 152, threonine 154, and threonine 223. Residues 168–421 (KNEVFLDVIE…ITQNGDYQLR (254 aa)) enclose the MHD domain.

This sequence belongs to the adaptor complexes medium subunit family. Adaptor protein complex 1 (AP-1) is a heterotetramer composed of two large adaptins (gamma-type subunit AP1G1 and beta-type subunit AP1B1), a medium adaptin (mu-type subunit AP1M1 or AP1M2) and a small adaptin (sigma-type subunit AP1S1 or AP1S2 or AP1S3). Interacts with MARCHF11. Post-translationally, phosphorylation of membrane-bound AP1M1/AP1M2 increases its affinity for sorting signals.

Its subcellular location is the cytoplasmic vesicle. It is found in the clathrin-coated vesicle membrane. It localises to the golgi apparatus. Its function is as follows. Subunit of clathrin-associated adaptor protein complex 1 that plays a role in protein sorting in the trans-Golgi network (TGN) and endosomes. The AP complexes mediate the recruitment of clathrin to membranes and the recognition of sorting signals within the cytosolic tails of transmembrane cargo molecules. In Bos taurus (Bovine), this protein is AP-1 complex subunit mu-1.